Here is a 429-residue protein sequence, read N- to C-terminus: MYVEIVDVRAREVLDSRGNPTVEAEVVLEDGTMGRAIVPSGASTGKFEALEIRDKDKKRYLGKGVLKAVENVNETIAPALIGMNAFDQPLVDKTLIELDGTENKSKLGANAILAVSMAVARAAANYLGLPLYKYLGGVNAKVLPVPLMNVINGGQHADNNLDLQEFMIVPAGFDSFREALRAGAEIFHTLKKILHEAGHVTAVGDEGGFAPNLSSNEEAIKVLIEAIEKAGYKPGEEVFIALDCAASSFYDEEKGVYYVDGEEKSSEVLMGYYEELVAKYPIISIEDPFAEEDWDAFVEFTKRVGNKVQIVGDDLYVTNVKRLSKGIELKATNSILIKLNQIGTVTETLDAVEMAQKNNMTAIISHRSGESEDTFIADLAVATNAGFIKTGSLSRSERIAKYNQLLRIEEELGKVAEFRGLKSFYSIKR.

Residue Gln-164 coordinates (2R)-2-phosphoglycerate. Glu-206 acts as the Proton donor in catalysis. Mg(2+) is bound by residues Asp-243, Glu-286, and Asp-313. (2R)-2-phosphoglycerate is bound by residues Lys-338, Arg-367, Ser-368, and Lys-389. Lys-338 functions as the Proton acceptor in the catalytic mechanism.

Belongs to the enolase family. As to quaternary structure, homooctamer. Forms a ring-shaped particle. It depends on Mg(2+) as a cofactor.

Its subcellular location is the cytoplasm. The protein localises to the secreted. It localises to the cell surface. The enzyme catalyses (2R)-2-phosphoglycerate = phosphoenolpyruvate + H2O. Its pathway is carbohydrate degradation; glycolysis; pyruvate from D-glyceraldehyde 3-phosphate: step 4/5. Inhibited by fluoride and phosphate. Its function is as follows. Catalyzes the reversible conversion of 2-phosphoglycerate (2-PG) into phosphoenolpyruvate (PEP). It is essential for the degradation of carbohydrates via glycolysis. The polypeptide is Enolase (Thermotoga maritima (strain ATCC 43589 / DSM 3109 / JCM 10099 / NBRC 100826 / MSB8)).